A 343-amino-acid polypeptide reads, in one-letter code: Branched-chain-amino-acid aminotransferase (343 aa).

N6-(pyridoxal phosphate)lysine is present on lysine 182.

The protein belongs to the class-IV pyridoxal-phosphate-dependent aminotransferase family. Pyridoxal 5'-phosphate serves as cofactor.

It carries out the reaction L-leucine + 2-oxoglutarate = 4-methyl-2-oxopentanoate + L-glutamate. It catalyses the reaction L-isoleucine + 2-oxoglutarate = (S)-3-methyl-2-oxopentanoate + L-glutamate. The enzyme catalyses L-valine + 2-oxoglutarate = 3-methyl-2-oxobutanoate + L-glutamate. It participates in amino-acid biosynthesis; L-isoleucine biosynthesis; L-isoleucine from 2-oxobutanoate: step 4/4. Its pathway is amino-acid biosynthesis; L-leucine biosynthesis; L-leucine from 3-methyl-2-oxobutanoate: step 4/4. The protein operates within amino-acid biosynthesis; L-valine biosynthesis; L-valine from pyruvate: step 4/4. Acts on leucine, isoleucine and valine. In Haemophilus influenzae (strain ATCC 51907 / DSM 11121 / KW20 / Rd), this protein is Branched-chain-amino-acid aminotransferase (ilvE).